The primary structure comprises 1074 residues: Carbamoyl phosphate synthase large chain (1074 aa).

Residues 1–399 (MPKRSDIKKV…ALMKAIRSLD (399 aa)) are carboxyphosphate synthetic domain. Positions 129, 169, 175, 176, 208, 210, 215, 241, 242, 243, 284, and 296 each coordinate ATP. The ATP-grasp 1 domain occupies 133–325 (KKAMERIGEP…IARVTAKIAI (193 aa)). The Mg(2+) site is built by Q284, E296, and N298. Mn(2+) contacts are provided by Q284, E296, and N298. Positions 400 to 543 (IDIDLGYNGK…YSTYDEECEL (144 aa)) are oligomerization domain. A carbamoyl phosphate synthetic domain region spans residues 544-933 (NPSDNKKVLI…FKAEMSAENN (390 aa)). The ATP-grasp 2 domain maps to 674–865 (NKLLNKLGIP…LAKIAAKVMA (192 aa)). 10 residues coordinate ATP: R710, D749, L751, E756, G781, I782, H783, S784, Q824, and E836. Mg(2+) contacts are provided by Q824, E836, and N838. Mn(2+) contacts are provided by Q824, E836, and N838. Residues 932–1074 (NNLPLDGIVF…YHREVRYRAL (143 aa)) enclose the MGS-like domain. Residues 934-1074 (LPLDGIVFIS…YHREVRYRAL (141 aa)) are allosteric domain.

It belongs to the CarB family. Composed of two chains; the small (or glutamine) chain promotes the hydrolysis of glutamine to ammonia, which is used by the large (or ammonia) chain to synthesize carbamoyl phosphate. Tetramer of heterodimers (alpha,beta)4. Mg(2+) is required as a cofactor. It depends on Mn(2+) as a cofactor.

The catalysed reaction is hydrogencarbonate + L-glutamine + 2 ATP + H2O = carbamoyl phosphate + L-glutamate + 2 ADP + phosphate + 2 H(+). It catalyses the reaction hydrogencarbonate + NH4(+) + 2 ATP = carbamoyl phosphate + 2 ADP + phosphate + 2 H(+). It functions in the pathway amino-acid biosynthesis; L-arginine biosynthesis; carbamoyl phosphate from bicarbonate: step 1/1. The protein operates within pyrimidine metabolism; UMP biosynthesis via de novo pathway; (S)-dihydroorotate from bicarbonate: step 1/3. Its function is as follows. Large subunit of the glutamine-dependent carbamoyl phosphate synthetase (CPSase). CPSase catalyzes the formation of carbamoyl phosphate from the ammonia moiety of glutamine, carbonate, and phosphate donated by ATP, constituting the first step of 2 biosynthetic pathways, one leading to arginine and/or urea and the other to pyrimidine nucleotides. The large subunit (synthetase) binds the substrates ammonia (free or transferred from glutamine from the small subunit), hydrogencarbonate and ATP and carries out an ATP-coupled ligase reaction, activating hydrogencarbonate by forming carboxy phosphate which reacts with ammonia to form carbamoyl phosphate. In Methanothrix thermoacetophila (strain DSM 6194 / JCM 14653 / NBRC 101360 / PT) (Methanosaeta thermophila), this protein is Carbamoyl phosphate synthase large chain.